Here is a 162-residue protein sequence, read N- to C-terminus: Cyanate hydratase (162 aa).

Active-site residues include Arg90, Glu93, and Ser116.

Belongs to the cyanase family.

The catalysed reaction is cyanate + hydrogencarbonate + 3 H(+) = NH4(+) + 2 CO2. Its function is as follows. Catalyzes the reaction of cyanate with bicarbonate to produce ammonia and carbon dioxide. The protein is Cyanate hydratase of Populus trichocarpa (Western balsam poplar).